Consider the following 149-residue polypeptide: Transcriptional repressor NrdR (149 aa).

A zinc finger spans residues 3 to 34 (CPFCGHLETQVVETRISEDAEFIRRRRQCGAC). Positions 49-139 (PSIVKKDGRR…VYRSFEDIDE (91 aa)) constitute an ATP-cone domain.

It belongs to the NrdR family. Zn(2+) serves as cofactor.

Its function is as follows. Negatively regulates transcription of bacterial ribonucleotide reductase nrd genes and operons by binding to NrdR-boxes. The chain is Transcriptional repressor NrdR from Polaromonas naphthalenivorans (strain CJ2).